The following is a 549-amino-acid chain: DNA mismatch repair protein MutL (549 aa).

It belongs to the DNA mismatch repair MutL/HexB family.

Functionally, this protein is involved in the repair of mismatches in DNA. It is required for dam-dependent methyl-directed DNA mismatch repair. May act as a 'molecular matchmaker', a protein that promotes the formation of a stable complex between two or more DNA-binding proteins in an ATP-dependent manner without itself being part of a final effector complex. The sequence is that of DNA mismatch repair protein MutL from Pseudothermotoga lettingae (strain ATCC BAA-301 / DSM 14385 / NBRC 107922 / TMO) (Thermotoga lettingae).